Reading from the N-terminus, the 341-residue chain is MKVSDFDYSLPEERIAKYPPDNRGATRLLVLNRHTGSVQHARYSNLEAFLGYGDLLVINTTKVVRARLFAVKQTGAAIELMLLEKHEGPQNLALYRGRLKKGDRLLAHGHELIVEELAGQGVARLSVEGIESVHALFQNHAEVPIPPYLKRDAEAVDRERYQTVFAEHPGSVAAPTASLNMTPELLLKLEKGGVATAVMTLHVGLGTFLPIRTETMEEHVMHREFYSIPARTIEQIHETRRSGGRVVALGTTVTRALEHAATRISAFSGSDPLVGEADIFIHPGYSFQTIDALLTNFHAPRSTVLMLTAAFAGADHLRAAYREAVEKRYDFLSYGDSMLIS.

It belongs to the QueA family. Monomer.

The protein localises to the cytoplasm. The enzyme catalyses 7-aminomethyl-7-carbaguanosine(34) in tRNA + S-adenosyl-L-methionine = epoxyqueuosine(34) in tRNA + adenine + L-methionine + 2 H(+). It functions in the pathway tRNA modification; tRNA-queuosine biosynthesis. Its function is as follows. Transfers and isomerizes the ribose moiety from AdoMet to the 7-aminomethyl group of 7-deazaguanine (preQ1-tRNA) to give epoxyqueuosine (oQ-tRNA). The protein is S-adenosylmethionine:tRNA ribosyltransferase-isomerase of Chlorobium phaeovibrioides (strain DSM 265 / 1930) (Prosthecochloris vibrioformis (strain DSM 265)).